The chain runs to 344 residues: Protein pelota homolog (344 aa).

It belongs to the eukaryotic release factor 1 family. Pelota subfamily. In terms of assembly, monomer. The cofactor is a divalent metal cation.

The protein localises to the cytoplasm. Its function is as follows. May function in recognizing stalled ribosomes, interact with stem-loop structures in stalled mRNA molecules, and effect endonucleolytic cleavage of the mRNA. May play a role in the release non-functional ribosomes and degradation of damaged mRNAs. Has endoribonuclease activity. The sequence is that of Protein pelota homolog from Archaeoglobus fulgidus (strain ATCC 49558 / DSM 4304 / JCM 9628 / NBRC 100126 / VC-16).